A 2286-amino-acid polypeptide reads, in one-letter code: DNA polymerase epsilon catalytic subunit A (2286 aa).

The tract at residues 1-30 (MSLRSGGRRRADPGADGEASRDDGATSSVS) is disordered. Positions 9–24 (RRADPGADGEASRDDG) are enriched in basic and acidic residues. Phosphoserine occurs at positions 1184, 1297, 1317, and 1940. Residues 1939 to 1969 (DSQKAGGAEDEQENEDDEEERDGEEEEEAEE) are disordered. Residues 1946 to 1969 (AEDEQENEDDEEERDGEEEEEAEE) are compositionally biased toward acidic residues. C2158, C2161, C2187, and C2190 together coordinate Zn(2+). The CysA-type zinc-finger motif lies at 2158–2190 (CRSCNFCRDLDLCKDSSFSEDGAVLPQWLCSNC). 4 residues coordinate [4Fe-4S] cluster: C2221, C2224, C2236, and C2238. Positions 2221–2238 (CLKCRGVKETSMPVYCSC) match the CysB motif motif.

Belongs to the DNA polymerase type-B family. In terms of assembly, component of the DNA polymerase epsilon complex consisting of four subunits: the catalytic subunit POLE and the accessory subunits POLE2, POLE3 and POLE4. Interacts with RAD17 and TOPBP1.

It localises to the nucleus. The enzyme catalyses DNA(n) + a 2'-deoxyribonucleoside 5'-triphosphate = DNA(n+1) + diphosphate. Its function is as follows. Catalytic component of the DNA polymerase epsilon complex. Participates in chromosomal DNA replication. Required during synthesis of the leading DNA strands at the replication fork, binds at/or near replication origins and moves along DNA with the replication fork. Has 3'-5' proofreading exonuclease activity that corrects errors arising during DNA replication. Involved in DNA synthesis during DNA repair. Along with DNA polymerase POLD1 and DNA polymerase POLK, has a role in excision repair (NER) synthesis following UV irradiation. This is DNA polymerase epsilon catalytic subunit A from Homo sapiens (Human).